The following is a 414-amino-acid chain: Isocitrate dehydrogenase [NADP] cytoplasmic (414 aa).

Position 2 is an N-acetylserine (serine 2). Phosphotyrosine is present on tyrosine 42. Residue threonine 75–threonine 77 coordinates NADP(+). Threonine 77 lines the substrate pocket. An N6-acetyllysine modification is found at lysine 81. Arginine 82 serves as a coordination point for NADP(+). Substrate is bound by residues serine 94–arginine 100 and arginine 109. At lysine 126 the chain carries N6-succinyllysine. Residues arginine 132 and lysine 212 each contribute to the substrate site. N6-acetyllysine is present on residues lysine 224, lysine 233, and lysine 243. Aspartate 252 provides a ligand contact to Mn(2+). Residue lysine 260 participates in NADP(+) binding. Mn(2+)-binding residues include aspartate 275 and aspartate 279. Glycine 310–histidine 315 is a binding site for NADP(+). The residue at position 321 (lysine 321) is an N6-acetyllysine. Asparagine 328 provides a ligand contact to NADP(+). Position 389 is a phosphoserine (serine 389). N6-succinyllysine is present on lysine 400.

It belongs to the isocitrate and isopropylmalate dehydrogenases family. Homodimer. Mg(2+) serves as cofactor. Requires Mn(2+) as cofactor. Post-translationally, acetylation at Lys-374 dramatically reduces catalytic activity.

Its subcellular location is the cytoplasm. The protein resides in the cytosol. The enzyme catalyses D-threo-isocitrate + NADP(+) = 2-oxoglutarate + CO2 + NADPH. Its function is as follows. Catalyzes the NADP(+)-dependent oxidative decarboxylation of isocitrate (D-threo-isocitrate) to 2-ketoglutarate (2-oxoglutarate), which is required by other enzymes such as the phytanoyl-CoA dioxygenase. Plays a critical role in the generation of NADPH, an important cofactor in many biosynthesis pathways. May act as a corneal epithelial crystallin and may be involved in maintaining corneal epithelial transparency. The chain is Isocitrate dehydrogenase [NADP] cytoplasmic (IDH1) from Microtus mexicanus (Mexican vole).